Consider the following 62-residue polypeptide: Prokaryotic ubiquitin-like protein Pup 2 (62 aa).

The interval 1-34 (MRQEKPKRHGREDDEPPEPAPAGRARDTTVGDDT) is disordered. The interval 21–56 (PAGRARDTTVGDDTDELLDEIDGVLEENAVEFVRSY) is ARC ATPase binding. Residue Glu62 forms an Isoglutamyl lysine isopeptide (Glu-Lys) (interchain with K-? in acceptor proteins) linkage.

This sequence belongs to the prokaryotic ubiquitin-like protein family. In terms of assembly, strongly interacts with the proteasome-associated ATPase ARC through a hydrophobic interface; the interacting region of Pup lies in its C-terminal half. There is one Pup binding site per ARC hexamer ring.

The protein operates within protein degradation; proteasomal Pup-dependent pathway. Functionally, protein modifier that is covalently attached to lysine residues of substrate proteins, thereby targeting them for proteasomal degradation. The tagging system is termed pupylation. The sequence is that of Prokaryotic ubiquitin-like protein Pup 2 from Saccharopolyspora erythraea (strain ATCC 11635 / DSM 40517 / JCM 4748 / NBRC 13426 / NCIMB 8594 / NRRL 2338).